Consider the following 155-residue polypeptide: Ribosomal RNA large subunit methyltransferase H (155 aa).

S-adenosyl-L-methionine is bound by residues Leu-72, Gly-103, and 122–127 (LSALTL).

This sequence belongs to the RNA methyltransferase RlmH family. In terms of assembly, homodimer.

Its subcellular location is the cytoplasm. The catalysed reaction is pseudouridine(1915) in 23S rRNA + S-adenosyl-L-methionine = N(3)-methylpseudouridine(1915) in 23S rRNA + S-adenosyl-L-homocysteine + H(+). Specifically methylates the pseudouridine at position 1915 (m3Psi1915) in 23S rRNA. This Salmonella choleraesuis (strain SC-B67) protein is Ribosomal RNA large subunit methyltransferase H.